We begin with the raw amino-acid sequence, 365 residues long: Crh-like protein ARB_03382 (365 aa).

The signal sequence occupies residues 1–25; it reads MMASRRISVLSSLGLFACLLSPVVA. The Extracellular portion of the chain corresponds to 26–302; sequence QTFTYCNPLE…RWRELPTAAK (277 aa). A disulfide bridge links C31 with C39. N-linked (GlcNAc...) asparagine glycosylation is found at N48, N54, N63, and N77. The GH16 domain maps to 50 to 243; sequence TTYLNSSLNP…YEKTPYIMSV (194 aa). E125 (nucleophile) is an active-site residue. E129 acts as the Proton donor in catalysis. E129 provides a ligand contact to chitin. N-linked (GlcNAc...) asparagine glycosylation is found at N147 and N168. Residues R209 and W213 each coordinate chitin. The chain crosses the membrane as a helical span at residues 303–323; sequence IAIFASIGGLVILGMAIIAFC. The Cytoplasmic portion of the chain corresponds to 324-365; that stretch reads CVKQRRAGRREFSMENSKFVEDQNNVMAMRTQWNHKYKPVGS.

It belongs to the glycosyl hydrolase 16 family. CRH1 subfamily.

The protein resides in the membrane. The enzyme catalyses Random endo-hydrolysis of N-acetyl-beta-D-glucosaminide (1-&gt;4)-beta-linkages in chitin and chitodextrins.. In terms of biological role, dual chitinase/transglycosylase that plays a role in cell wall architecture. Chitinase and transglycosylase activities are coupled. Required for the polysaccharide cross-linking at the septa and the cell wall. More specifically, transfers chitin to 1,6-beta-glucan in the cell wall. Plays an important role in fungal pathogenesis. Involved in cell wall assembly and regeneration, filamentation, and adherence to host cells. The chain is Crh-like protein ARB_03382 from Arthroderma benhamiae (strain ATCC MYA-4681 / CBS 112371) (Trichophyton mentagrophytes).